Consider the following 588-residue polypeptide: 2-isopropylmalate synthase (588 aa).

One can recognise a Pyruvate carboxyltransferase domain in the interval 40–314; it reads PRWCAVDLRD…DPQIDFSDLD (275 aa). Residues Asp-49, His-253, His-255, and Asn-289 each coordinate Mg(2+). The interval 456 to 588 is regulatory domain; it reads APLDRVEEKW…TVREPELAAV (133 aa).

It belongs to the alpha-IPM synthase/homocitrate synthase family. LeuA type 2 subfamily. Homodimer. Mg(2+) serves as cofactor.

Its subcellular location is the cytoplasm. It carries out the reaction 3-methyl-2-oxobutanoate + acetyl-CoA + H2O = (2S)-2-isopropylmalate + CoA + H(+). It participates in amino-acid biosynthesis; L-leucine biosynthesis; L-leucine from 3-methyl-2-oxobutanoate: step 1/4. Its function is as follows. Catalyzes the condensation of the acetyl group of acetyl-CoA with 3-methyl-2-oxobutanoate (2-ketoisovalerate) to form 3-carboxy-3-hydroxy-4-methylpentanoate (2-isopropylmalate). The chain is 2-isopropylmalate synthase from Clavibacter sepedonicus (Clavibacter michiganensis subsp. sepedonicus).